Reading from the N-terminus, the 270-residue chain is Protein-ADP-ribose hydrolase (270 aa).

One can recognise a Macro domain in the interval 73–267; that stretch reads VSVKDCQKTN…LYDTYLQKEN (195 aa). ADP-D-ribose is bound by residues Asp-92, Ile-93, and Asn-106. The Zn(2+) site is built by Cys-112, His-117, and Cys-119. ADP-D-ribose is bound by residues Cys-119, Ile-120, Asp-121, Ser-212, Thr-213, Gly-214, Glu-215, and Phe-216.

Belongs to the MacroD-type family. Zn-Macro subfamily. Zn(2+) serves as cofactor.

The catalysed reaction is 4-O-(ADP-D-ribosyl)-L-aspartyl-[protein] + H2O = L-aspartyl-[protein] + ADP-D-ribose + H(+). ADP-ribosylhydrolase that specifically reverses the SirTM-mediated mono-ADP-ribosylation at an asparatate residue of GcvH-L, by releasing ADP-ribose from the target protein. May play a role in the regulation of the response to host-induced oxidative stress. In Streptococcus pyogenes serotype M18 (strain MGAS8232), this protein is Protein-ADP-ribose hydrolase.